The following is a 307-amino-acid chain: 4-hydroxy-3-methylbut-2-enyl diphosphate reductase (307 aa).

Cysteine 13 provides a ligand contact to [4Fe-4S] cluster. (2E)-4-hydroxy-3-methylbut-2-enyl diphosphate-binding residues include histidine 42 and histidine 75. 2 residues coordinate dimethylallyl diphosphate: histidine 42 and histidine 75. Residues histidine 42 and histidine 75 each coordinate isopentenyl diphosphate. Residue cysteine 97 coordinates [4Fe-4S] cluster. Residue histidine 125 participates in (2E)-4-hydroxy-3-methylbut-2-enyl diphosphate binding. Histidine 125 is a binding site for dimethylallyl diphosphate. Histidine 125 lines the isopentenyl diphosphate pocket. Residue glutamate 127 is the Proton donor of the active site. Position 165 (threonine 165) interacts with (2E)-4-hydroxy-3-methylbut-2-enyl diphosphate. Cysteine 195 is a binding site for [4Fe-4S] cluster. (2E)-4-hydroxy-3-methylbut-2-enyl diphosphate contacts are provided by serine 223, serine 224, asparagine 225, and serine 267. Residues serine 223, serine 224, asparagine 225, and serine 267 each coordinate dimethylallyl diphosphate. Isopentenyl diphosphate is bound by residues serine 223, serine 224, asparagine 225, and serine 267.

Belongs to the IspH family. [4Fe-4S] cluster is required as a cofactor.

It catalyses the reaction isopentenyl diphosphate + 2 oxidized [2Fe-2S]-[ferredoxin] + H2O = (2E)-4-hydroxy-3-methylbut-2-enyl diphosphate + 2 reduced [2Fe-2S]-[ferredoxin] + 2 H(+). The catalysed reaction is dimethylallyl diphosphate + 2 oxidized [2Fe-2S]-[ferredoxin] + H2O = (2E)-4-hydroxy-3-methylbut-2-enyl diphosphate + 2 reduced [2Fe-2S]-[ferredoxin] + 2 H(+). Its pathway is isoprenoid biosynthesis; dimethylallyl diphosphate biosynthesis; dimethylallyl diphosphate from (2E)-4-hydroxy-3-methylbutenyl diphosphate: step 1/1. The protein operates within isoprenoid biosynthesis; isopentenyl diphosphate biosynthesis via DXP pathway; isopentenyl diphosphate from 1-deoxy-D-xylulose 5-phosphate: step 6/6. Its function is as follows. Catalyzes the conversion of 1-hydroxy-2-methyl-2-(E)-butenyl 4-diphosphate (HMBPP) into a mixture of isopentenyl diphosphate (IPP) and dimethylallyl diphosphate (DMAPP). Acts in the terminal step of the DOXP/MEP pathway for isoprenoid precursor biosynthesis. In Chlamydia trachomatis serovar L2 (strain ATCC VR-902B / DSM 19102 / 434/Bu), this protein is 4-hydroxy-3-methylbut-2-enyl diphosphate reductase.